Reading from the N-terminus, the 419-residue chain is UDP-N-acetylglucosamine 1-carboxyvinyltransferase (419 aa).

Position 22 to 23 (22 to 23 (KN)) interacts with phosphoenolpyruvate. Arg-93 provides a ligand contact to UDP-N-acetyl-alpha-D-glucosamine. Cys-117 (proton donor) is an active-site residue. Cys-117 carries the 2-(S-cysteinyl)pyruvic acid O-phosphothioketal modification. Positions 307 and 329 each coordinate UDP-N-acetyl-alpha-D-glucosamine.

It belongs to the EPSP synthase family. MurA subfamily.

The protein resides in the cytoplasm. The enzyme catalyses phosphoenolpyruvate + UDP-N-acetyl-alpha-D-glucosamine = UDP-N-acetyl-3-O-(1-carboxyvinyl)-alpha-D-glucosamine + phosphate. Its pathway is cell wall biogenesis; peptidoglycan biosynthesis. Functionally, cell wall formation. Adds enolpyruvyl to UDP-N-acetylglucosamine. The protein is UDP-N-acetylglucosamine 1-carboxyvinyltransferase of Pseudoalteromonas atlantica (strain T6c / ATCC BAA-1087).